Consider the following 453-residue polypeptide: uncharacterized protein (453 aa).

[4Fe-4S] cluster contacts are provided by Cys74, Cys80, Cys83, and Cys162. Gln286, Tyr315, Glu336, and Asp384 together coordinate S-adenosyl-L-methionine. The Nucleophile role is filled by Cys411.

It belongs to the class I-like SAM-binding methyltransferase superfamily. RNA M5U methyltransferase family.

This is an uncharacterized protein from Staphylococcus aureus (strain Mu50 / ATCC 700699).